Consider the following 210-residue polypeptide: Chaperone protein TorD (210 aa).

It belongs to the TorD/DmsD family. TorD subfamily.

The protein localises to the cytoplasm. In terms of biological role, involved in the biogenesis of TorA. Acts on TorA before the insertion of the molybdenum cofactor and, as a result, probably favors a conformation of the apoenzyme that is competent for acquiring the cofactor. This Salmonella schwarzengrund (strain CVM19633) protein is Chaperone protein TorD.